The primary structure comprises 261 residues: Undecaprenyl-diphosphatase (261 aa).

Helical transmembrane passes span 9–31 (ALLL…GHLT), 46–66 (FLKT…LLLY), 80–100 (IAVA…LIKG), 102–122 (ILGN…VLLF), 137–157 (ALPL…ALFP), 180–200 (AEFS…YDLW), 209–229 (GGWS…LVTV), and 240–260 (GFRP…FFFL).

It belongs to the UppP family.

It is found in the cell inner membrane. It carries out the reaction di-trans,octa-cis-undecaprenyl diphosphate + H2O = di-trans,octa-cis-undecaprenyl phosphate + phosphate + H(+). Its function is as follows. Catalyzes the dephosphorylation of undecaprenyl diphosphate (UPP). Confers resistance to bacitracin. The chain is Undecaprenyl-diphosphatase from Thermus thermophilus (strain ATCC 27634 / DSM 579 / HB8).